A 233-amino-acid polypeptide reads, in one-letter code: tRNA (guanine-N(1)-)-methyltransferase (233 aa).

Residues Gly110 and 130–135 (IGDYVM) each bind S-adenosyl-L-methionine.

It belongs to the RNA methyltransferase TrmD family. As to quaternary structure, homodimer.

The protein localises to the cytoplasm. It carries out the reaction guanosine(37) in tRNA + S-adenosyl-L-methionine = N(1)-methylguanosine(37) in tRNA + S-adenosyl-L-homocysteine + H(+). Specifically methylates guanosine-37 in various tRNAs. The polypeptide is tRNA (guanine-N(1)-)-methyltransferase (Finegoldia magna (strain ATCC 29328 / DSM 20472 / WAL 2508) (Peptostreptococcus magnus)).